A 92-amino-acid chain; its full sequence is SPbeta prophage-derived uncharacterized protein YoqM (92 aa).

Residues 1 to 25 (MKLRKVLTGSVLSLGLLVSASPAFA) form the signal peptide.

In Bacillus subtilis (strain 168), this protein is SPbeta prophage-derived uncharacterized protein YoqM (yoqM).